A 1173-amino-acid chain; its full sequence is Calcium-transporting ATPase 2 (1173 aa).

The interval 1-24 (MSRQDENSALLANNENNKPSYTGN) is disordered. Over 1-114 (MSRQDENSAL…LQLVWAAFND (114 aa)) the chain is Cytoplasmic. The segment covering 7 to 17 (NSALLANNENN) has biased composition (low complexity). The helical transmembrane segment at 115 to 139 (KTMQLLTVAAVVSFVLGLYELWMQP) threads the bilayer. The Vacuolar segment spans residues 140–152 (PQYDPEGNKIKQV). Residues 153-173 (DWIEGVAIMIAVFVVVLVSAA) traverse the membrane as a helical segment. At 174-349 (NDYQKELQFA…LADNISVYGC (176 aa)) the chain is on the cytoplasmic side. Residues 350 to 368 (VSAIILFLVLFTRYLFYII) traverse the membrane as a helical segment. The Vacuolar portion of the chain corresponds to 369–388 (PEDGRFHDLDPAQKGSKFMN). The helical transmembrane segment at 389–409 (IFITSITVIVVAVPEGLPLAV) threads the bilayer. Ca(2+) is bound by residues V398 and E403. Residues 410-899 (TLALAFATTR…RCVSVSIKKF (490 aa)) are Cytoplasmic-facing. The active-site 4-aspartylphosphate intermediate is D445. Positions 445 and 447 each coordinate Mg(2+). ATP is bound by residues T447, K643, 762–764 (TGD), R816, and K822. Residue D841 participates in Mg(2+) binding. N844 contacts ATP. A helical transmembrane segment spans residues 900–922 (IQFQLIVNITAVILTFVSSVASS). N907 lines the Ca(2+) pocket. Residues 923–929 (DETSVLT) lie on the Vacuolar side of the membrane. Residues 930–950 (AVQLLWINLIMDTLAALALAT) traverse the membrane as a helical segment. Residues N937 and D941 each coordinate Ca(2+). The Cytoplasmic segment spans residues 951-976 (DKPDPNIMDRKPRGRSTSLISVSTWK). The chain crosses the membrane as a helical span at residues 977-998 (MILSQATLQLIVTFILHFYGPE). The Vacuolar segment spans residues 999-1010 (LFFKKHEDEITS). Residues 1011–1029 (HQQQQLNAMTFNTFVWLQF) form a helical membrane-spanning segment. The Cytoplasmic segment spans residues 1030-1065 (FTMLVSRKLDEGDGISNWRGRISAANLNFFQDLGRN). The chain crosses the membrane as a helical span at residues 1066–1086 (YYFLTIMAIIGSCQVLIMFFG). Residues 1087-1099 (GAPFSIARQTKSM) lie on the Vacuolar side of the membrane. A helical transmembrane segment spans residues 1100–1120 (WITAVLCGMLSLIMGVLVRIC). The Cytoplasmic segment spans residues 1121–1173 (PDEVAVKVFPAAFVQRFKYVFGLEFLRKNHTGKHDDEEALLEESDSPESTAFY).

This sequence belongs to the cation transport ATPase (P-type) (TC 3.A.3) family.

The protein localises to the vacuole membrane. It carries out the reaction Ca(2+)(in) + ATP + H2O = Ca(2+)(out) + ADP + phosphate + H(+). Functionally, this magnesium-dependent enzyme catalyzes the hydrolysis of ATP coupled with the transport of calcium. Transports the calcium to the vacuole and participates in the control of the cytosolic free calcium. This chain is Calcium-transporting ATPase 2 (PMC1), found in Saccharomyces cerevisiae (strain ATCC 204508 / S288c) (Baker's yeast).